Consider the following 115-residue polypeptide: NADH-ubiquinone oxidoreductase chain 3 (115 aa).

The next 3 membrane-spanning stretches (helical) occupy residues 3–23, 55–75, and 84–104; these read FVLALTVNTLLALLLMTITFW, FFLVAITFLLFDLEIALLLPL, and LPLMTTSSLMLIIILALGLTY.

It belongs to the complex I subunit 3 family. In terms of assembly, core subunit of respiratory chain NADH dehydrogenase (Complex I) which is composed of 45 different subunits. Interacts with TMEM186. Interacts with TMEM242.

Its subcellular location is the mitochondrion inner membrane. It carries out the reaction a ubiquinone + NADH + 5 H(+)(in) = a ubiquinol + NAD(+) + 4 H(+)(out). Core subunit of the mitochondrial membrane respiratory chain NADH dehydrogenase (Complex I) which catalyzes electron transfer from NADH through the respiratory chain, using ubiquinone as an electron acceptor. Essential for the catalytic activity of complex I. The protein is NADH-ubiquinone oxidoreductase chain 3 of Pongo abelii (Sumatran orangutan).